The sequence spans 368 residues: Microtubule-associated protein Jupiter (368 aa).

Phosphoserine is present on serine 30. Threonine 41 carries the post-translational modification Phosphothreonine. The segment covering 81 to 93 has biased composition (basic and acidic residues); the sequence is RRGQKSVDSHSRL. Positions 81 to 106 are disordered; sequence RRGQKSVDSHSRLFGEPSRPITPGKN. Threonine 102 carries the post-translational modification Phosphothreonine. 3 positions are modified to phosphoserine: serine 111, serine 146, and serine 157. Low complexity-rich tracts occupy residues 129 to 157 and 238 to 248; these read NGNTNSTTNGHYNGKSGSVSSASSSVSSS and GRYGYSSQSRR. Disordered stretches follow at residues 129 to 164, 196 to 256, and 316 to 368; these read NGNTNSTTNGHYNGKSGSVSSASSSVSSSTENLKIN, SQGN…SPLN, and KPKK…SGLW. Over residues 337 to 354 the composition is skewed to polar residues; that stretch reads GSDSAQTPTMNGANQVIN.

This sequence belongs to the MAP Jupiter family.

It localises to the nucleus. Its subcellular location is the cytoplasm. It is found in the cytoskeleton. The protein localises to the spindle. Functionally, binds to all microtubule populations. The protein is Microtubule-associated protein Jupiter of Drosophila willistoni (Fruit fly).